The chain runs to 289 residues: Ribosomal RNA small subunit methyltransferase A (289 aa).

Positions 21, 23, 48, 69, 94, and 120 each coordinate S-adenosyl-L-methionine.

Belongs to the class I-like SAM-binding methyltransferase superfamily. rRNA adenine N(6)-methyltransferase family. RsmA subfamily.

The protein resides in the cytoplasm. It catalyses the reaction adenosine(1518)/adenosine(1519) in 16S rRNA + 4 S-adenosyl-L-methionine = N(6)-dimethyladenosine(1518)/N(6)-dimethyladenosine(1519) in 16S rRNA + 4 S-adenosyl-L-homocysteine + 4 H(+). In terms of biological role, specifically dimethylates two adjacent adenosines (A1518 and A1519) in the loop of a conserved hairpin near the 3'-end of 16S rRNA in the 30S particle. May play a critical role in biogenesis of 30S subunits. The chain is Ribosomal RNA small subunit methyltransferase A from Actinobacillus pleuropneumoniae serotype 7 (strain AP76).